Here is a 309-residue protein sequence, read N- to C-terminus: Homoserine kinase (309 aa).

95-105 lines the ATP pocket; sequence PQSRGLGSSAA.

This sequence belongs to the GHMP kinase family. Homoserine kinase subfamily.

The protein resides in the cytoplasm. The enzyme catalyses L-homoserine + ATP = O-phospho-L-homoserine + ADP + H(+). It functions in the pathway amino-acid biosynthesis; L-threonine biosynthesis; L-threonine from L-aspartate: step 4/5. Its function is as follows. Catalyzes the ATP-dependent phosphorylation of L-homoserine to L-homoserine phosphate. The sequence is that of Homoserine kinase from Corynebacterium efficiens (strain DSM 44549 / YS-314 / AJ 12310 / JCM 11189 / NBRC 100395).